The primary structure comprises 279 residues: MTNNDAAVEAAGSSRASSSKQQLKLEITEKVRVLCLHGYRQNGEAFKNKLGSFRKFANKYAEFVFITAPHVAKALESAAEPVPEQRSWWANKDDGSFKGTNKGGPAFGFQESLRCVEEAWRTQGPFQGLLGFSQGACFVGLICGLAKKKLTSIRPEFAVLASGFLSGSLVHMSAYEEAISIPTLHIYGQTDEIIPKEMSESLAARFKNAEVLEHSGGHYFPATAQQKQTFINFFQDRLQEYLEHEELQQSGNASFVDSGAEDDNDAEVAAMTAELDESD.

Active-site charge relay system residues include serine 133, aspartate 191, and histidine 218. Residues glutamine 249–aspartate 279 are disordered.

This sequence belongs to the LovG family.

The polypeptide is Esterase CG5412 (Drosophila melanogaster (Fruit fly)).